The sequence spans 102 residues: ATP-dependent Clp protease adapter protein ClpS (102 aa).

The protein belongs to the ClpS family. Binds to the N-terminal domain of the chaperone ClpA.

Functionally, involved in the modulation of the specificity of the ClpAP-mediated ATP-dependent protein degradation. This Janthinobacterium sp. (strain Marseille) (Minibacterium massiliensis) protein is ATP-dependent Clp protease adapter protein ClpS.